A 463-amino-acid polypeptide reads, in one-letter code: Endoglucanase EG-1 (463 aa).

A signal peptide spans 1–22 (MAPSATLPLTTAILAIGRLVAA). Residues 23–397 (QQPGTSTPEV…DIGSTTNSTG (375 aa)) are catalytic. N-linked (GlcNAc...) asparagine glycosylation is found at asparagine 78, asparagine 164, asparagine 204, and asparagine 208. The Nucleophile role is filled by glutamate 218. Glutamate 223 acts as the Proton donor in catalysis. Residues 390 to 429 (GSTTNSTGGNPPPPPPPASSTTFSTTRRSSTTSSSPSCTQ) are disordered. N-linked (GlcNAc...) asparagine glycosylation is present at asparagine 394. Residues 402 to 427 (PPPPPASSTTFSTTRRSSTTSSSPSC) are linker. The span at 408-429 (SSTTFSTTRRSSTTSSSPSCTQ) shows a compositional bias: low complexity. The region spanning 427 to 463 (CTQTHWGQCGGIGYTGCKTCTSGTTCQYGNDYYSQCL) is the CBM1 domain. 2 cysteine pairs are disulfide-bonded: cysteine 435–cysteine 452 and cysteine 446–cysteine 462.

It belongs to the glycosyl hydrolase 7 (cellulase C) family.

Its subcellular location is the secreted. It catalyses the reaction Endohydrolysis of (1-&gt;4)-beta-D-glucosidic linkages in cellulose, lichenin and cereal beta-D-glucans.. Its function is as follows. The biological conversion of cellulose to glucose generally requires three types of hydrolytic enzymes: (1) Endoglucanases which cut internal beta-1,4-glucosidic bonds; (2) Exocellobiohydrolases that cut the disaccharide cellobiose from the non-reducing end of the cellulose polymer chain; (3) Beta-1,4-glucosidases which hydrolyze the cellobiose and other short cello-oligosaccharides to glucose. The polypeptide is Endoglucanase EG-1 (egl1) (Trichoderma longibrachiatum).